A 151-amino-acid polypeptide reads, in one-letter code: Immunity protein YezG (151 aa).

Positions 62 to 90 (KDIFKTLLRELRELFEELRTEHRNNNDDV) form a coiled coil.

Interacts with cognate toxin YeeF but not with non-cognate toxin YobL. The interaction probably inhibits the toxic activity of YeeF. May bind with a stoichiometry of 2:2 to YeeF.

It is found in the cytoplasm. Functionally, immunity component of one of 6 LXG toxin-immunity modules in this strain. They promote kin selection, mediate competition in biofilms, and drive spatial segregation of different strains, indicating that LXG toxins may help avoid warfare between strains in biofilms. Mediates intercellular competition during biofilm formation; disruption of the operon disadvantages the bacteria, but overexpression of the cognate immunity protein restores growth in competition with wild-type. In situ neutralizes the toxic effect of cognate toxin YeeF. Probably neutralizes the ability to inhibit growth of cognate toxin YeeF. Probably does not have immunity protein activity on other LXG toxins. This is Immunity protein YezG (yezG) from Bacillus subtilis (strain 168).